We begin with the raw amino-acid sequence, 100 residues long: MNLSPREKDKLLVSMAAMVARRRLERGVKLNHPEAVALITDFIVEGARDGRSVAELMHAGAQVITRDQCMDGIAEMIHDIQVEATFPDGTKLVTVHQPIR.

The protein belongs to the urease gamma subunit family. Heterotrimer of UreA (gamma), UreB (beta) and UreC (alpha) subunits. Three heterotrimers associate to form the active enzyme.

The protein localises to the cytoplasm. The enzyme catalyses urea + 2 H2O + H(+) = hydrogencarbonate + 2 NH4(+). The protein operates within nitrogen metabolism; urea degradation; CO(2) and NH(3) from urea (urease route): step 1/1. This chain is Urease subunit gamma, found in Rhodopseudomonas palustris (strain ATCC BAA-98 / CGA009).